Reading from the N-terminus, the 230-residue chain is Enolase-phosphatase E1 (230 aa).

Belongs to the HAD-like hydrolase superfamily. MasA/MtnC family. In terms of assembly, monomer. It depends on Mg(2+) as a cofactor.

It catalyses the reaction 5-methylsulfanyl-2,3-dioxopentyl phosphate + H2O = 1,2-dihydroxy-5-(methylsulfanyl)pent-1-en-3-one + phosphate. It functions in the pathway amino-acid biosynthesis; L-methionine biosynthesis via salvage pathway; L-methionine from S-methyl-5-thio-alpha-D-ribose 1-phosphate: step 3/6. The protein operates within amino-acid biosynthesis; L-methionine biosynthesis via salvage pathway; L-methionine from S-methyl-5-thio-alpha-D-ribose 1-phosphate: step 4/6. Functionally, bifunctional enzyme that catalyzes the enolization of 2,3-diketo-5-methylthiopentyl-1-phosphate (DK-MTP-1-P) into the intermediate 2-hydroxy-3-keto-5-methylthiopentenyl-1-phosphate (HK-MTPenyl-1-P), which is then dephosphorylated to form the acireductone 1,2-dihydroxy-3-keto-5-methylthiopentene (DHK-MTPene). In Sulfurihydrogenibium sp. (strain YO3AOP1), this protein is Enolase-phosphatase E1.